Consider the following 950-residue polypeptide: Glycine dehydrogenase (decarboxylating) (950 aa).

Lysine 699 carries the N6-(pyridoxal phosphate)lysine modification.

The protein belongs to the GcvP family. In terms of assembly, the glycine cleavage system is composed of four proteins: P, T, L and H. The cofactor is pyridoxal 5'-phosphate.

It catalyses the reaction N(6)-[(R)-lipoyl]-L-lysyl-[glycine-cleavage complex H protein] + glycine + H(+) = N(6)-[(R)-S(8)-aminomethyldihydrolipoyl]-L-lysyl-[glycine-cleavage complex H protein] + CO2. In terms of biological role, the glycine cleavage system catalyzes the degradation of glycine. The P protein binds the alpha-amino group of glycine through its pyridoxal phosphate cofactor; CO(2) is released and the remaining methylamine moiety is then transferred to the lipoamide cofactor of the H protein. The sequence is that of Glycine dehydrogenase (decarboxylating) from Chromobacterium violaceum (strain ATCC 12472 / DSM 30191 / JCM 1249 / CCUG 213 / NBRC 12614 / NCIMB 9131 / NCTC 9757 / MK).